A 134-amino-acid polypeptide reads, in one-letter code: Arsenate reductase (134 aa).

Active-site nucleophile residues include Cys11, Cys83, and Cys90. 2 disulfide bridges follow: Cys11–Cys83 and Cys83–Cys90.

This sequence belongs to the low molecular weight phosphotyrosine protein phosphatase family. Thioredoxin-coupled ArsC subfamily.

The protein resides in the cytoplasm. It carries out the reaction arsenate + [thioredoxin]-dithiol + H(+) = arsenite + [thioredoxin]-disulfide + H2O. Functionally, catalyzes the reduction of arsenate [As(V)] to arsenite [As(III)]. The polypeptide is Arsenate reductase (Bacillus cereus (strain AH187)).